Consider the following 456-residue polypeptide: MNDTIAAVSTASGPGAIGIIRMSGPGALSISSSFLFSKNGFLSPSDIQPRIAIQCVFQIGDRKIDQILFFYFKTPNSYTGEDLCEFHFHGNPILLREALDAIFRAGARPAKQGEFSRRAFLNGKLDLTGVEAIGRLISARSRFELELAQKNVFGEVSRLTSNLRSQLISLKAECEAEIDFSTEDLTYESLEERKVRIEGVKTFCQTVIAKSNSAEKVIQQLRIVLYGEPNTGKSSLMNVLLGKDRSIISEIPGTTRDYISEEILLEGIPVRLVDTAGVRETEDHIERLGIERSEKEFQSADIRLFLIDVSKKEEWKKFIAKAKGRLEGSILVANKIDIRDSSWNPNLFSDVKDLIICEISCKTKEGIPILLDEIQKKAATMGHVEDYVLLEERQRYHFETIVRCLDKTLRLIEEGAPAEIYIQEMNYALSEIGEVNGRVDTEEVLGRIFSKFCIGK.

Residues Arg-21, Glu-85, and Lys-124 each coordinate (6S)-5-formyl-5,6,7,8-tetrahydrofolate. The TrmE-type G domain maps to 220 to 379; that stretch reads QLRIVLYGEP…LLDEIQKKAA (160 aa). Asn-230 is a K(+) binding site. GTP is bound by residues 230–235, 249–255, and 274–277; these read NTGKSS, SEIPGTT, and DTAG. Ser-234 serves as a coordination point for Mg(2+). The K(+) site is built by Ser-249, Ile-251, and Thr-254. Thr-255 provides a ligand contact to Mg(2+). Residue Lys-456 coordinates (6S)-5-formyl-5,6,7,8-tetrahydrofolate.

It belongs to the TRAFAC class TrmE-Era-EngA-EngB-Septin-like GTPase superfamily. TrmE GTPase family. Homodimer. Heterotetramer of two MnmE and two MnmG subunits. Requires K(+) as cofactor.

It is found in the cytoplasm. Functionally, exhibits a very high intrinsic GTPase hydrolysis rate. Involved in the addition of a carboxymethylaminomethyl (cmnm) group at the wobble position (U34) of certain tRNAs, forming tRNA-cmnm(5)s(2)U34. This is tRNA modification GTPase MnmE from Leptospira borgpetersenii serovar Hardjo-bovis (strain JB197).